The chain runs to 462 residues: ATP synthase subunit beta (462 aa).

ATP is bound at residue 152-159 (GGAGVGKT).

The protein belongs to the ATPase alpha/beta chains family. As to quaternary structure, F-type ATPases have 2 components, CF(1) - the catalytic core - and CF(0) - the membrane proton channel. CF(1) has five subunits: alpha(3), beta(3), gamma(1), delta(1), epsilon(1). CF(0) has three main subunits: a(1), b(2) and c(9-12). The alpha and beta chains form an alternating ring which encloses part of the gamma chain. CF(1) is attached to CF(0) by a central stalk formed by the gamma and epsilon chains, while a peripheral stalk is formed by the delta and b chains.

It localises to the cell inner membrane. It carries out the reaction ATP + H2O + 4 H(+)(in) = ADP + phosphate + 5 H(+)(out). Functionally, produces ATP from ADP in the presence of a proton gradient across the membrane. The catalytic sites are hosted primarily by the beta subunits. In Tolumonas auensis (strain DSM 9187 / NBRC 110442 / TA 4), this protein is ATP synthase subunit beta.